We begin with the raw amino-acid sequence, 177 residues long: Adenine phosphoribosyltransferase (177 aa).

It belongs to the purine/pyrimidine phosphoribosyltransferase family. Homodimer.

The protein resides in the cytoplasm. It carries out the reaction AMP + diphosphate = 5-phospho-alpha-D-ribose 1-diphosphate + adenine. It functions in the pathway purine metabolism; AMP biosynthesis via salvage pathway; AMP from adenine: step 1/1. Catalyzes a salvage reaction resulting in the formation of AMP, that is energically less costly than de novo synthesis. This chain is Adenine phosphoribosyltransferase, found in Pelodictyon phaeoclathratiforme (strain DSM 5477 / BU-1).